The primary structure comprises 951 residues: PE-PGRS family protein PE_PGRS3 (951 aa).

One can recognise a PE domain in the interval 4 to 94; it reads VIAAPEVIAA…GAYAAAEAAA (91 aa). The span at 887-919 shows a compositional bias: basic residues; the sequence is CRRQRRADRQRRQRRQRRQSRGHARCRRHRRAA. Residues 887–951 form a disordered region; the sequence is CRRQRRADRQ…GISCSPQMMP (65 aa).

Belongs to the mycobacterial PE family. PGRS subfamily.

The protein resides in the cell outer membrane. It is found in the secreted. It localises to the cell wall. The protein localises to the cell surface. Its function is as follows. The arginine-rich C-terminal region protrudes from the mycobacterial membrane and mediates M.tuberculosis entry into host epithelial cells. May serve as a bridge between mycobacteria and host cells by interacting with specific host phospholipids and extracting them from host cells, for their direct integration or as a source of phosphate, during phases of TB pathogenesis when M.tuberculosis is short of phosphate supply. The protein is PE-PGRS family protein PE_PGRS3 (PE_PGRS3) of Mycobacterium tuberculosis (strain CDC 1551 / Oshkosh).